Consider the following 367-residue polypeptide: GTP cyclohydrolase FolE2 (367 aa).

The protein belongs to the GTP cyclohydrolase IV family.

The catalysed reaction is GTP + H2O = 7,8-dihydroneopterin 3'-triphosphate + formate + H(+). The protein operates within cofactor biosynthesis; 7,8-dihydroneopterin triphosphate biosynthesis; 7,8-dihydroneopterin triphosphate from GTP: step 1/1. In terms of biological role, converts GTP to 7,8-dihydroneopterin triphosphate. The chain is GTP cyclohydrolase FolE2 from Ruegeria pomeroyi (strain ATCC 700808 / DSM 15171 / DSS-3) (Silicibacter pomeroyi).